Reading from the N-terminus, the 571-residue chain is Probable pectinesterase/pectinesterase inhibitor 58 (571 aa).

A signal peptide spans 1-28; sequence MGVDGELKKKKCIIAGVITALLVLMVVA. Residues Asn36, Asn91, Asn207, and Asn216 are each glycosylated (N-linked (GlcNAc...) asparagine). Residues 49 to 204 are pectinesterase inhibitor 58; the sequence is KTATTAVEAV…RELTSNGLAM (156 aa). Residues 259 to 556 form a pectinesterase 58 region; it reads NVVVAHDGSG…FTPARFLRGN (298 aa). Thr335 is a substrate binding site. Asn347 carries an N-linked (GlcNAc...) asparagine glycan. Gln365 contributes to the substrate binding site. Residue Asp388 is the Proton donor; for pectinesterase activity of the active site. An intrachain disulfide couples Cys402 to Cys422. Residue Asp409 is the Nucleophile; for pectinesterase activity of the active site. Arg477 and Trp479 together coordinate substrate.

This sequence in the N-terminal section; belongs to the PMEI family. It in the C-terminal section; belongs to the pectinesterase family. Expressed in siliques, but not in flower buds.

The protein resides in the secreted. It localises to the cell wall. It carries out the reaction [(1-&gt;4)-alpha-D-galacturonosyl methyl ester](n) + n H2O = [(1-&gt;4)-alpha-D-galacturonosyl](n) + n methanol + n H(+). It participates in glycan metabolism; pectin degradation; 2-dehydro-3-deoxy-D-gluconate from pectin: step 1/5. Its function is as follows. Acts in the modification of cell walls via demethylesterification of cell wall pectin. This is Probable pectinesterase/pectinesterase inhibitor 58 (PME58) from Arabidopsis thaliana (Mouse-ear cress).